We begin with the raw amino-acid sequence, 192 residues long: 4'-phosphopantetheinyl transferase AcpT (192 aa).

This sequence belongs to the P-Pant transferase superfamily. Gsp/Sfp/HetI/AcpT family.

It carries out the reaction apo-[ACP] + CoA = holo-[ACP] + adenosine 3',5'-bisphosphate + H(+). Its function is as follows. May be involved in an alternative pathway for phosphopantetheinyl transfer and holo-ACP synthesis. The native apo-protein substrate is unknown. This Salmonella typhi protein is 4'-phosphopantetheinyl transferase AcpT (acpT).